The following is a 219-amino-acid chain: tRNA (guanine-N(7)-)-methyltransferase (219 aa).

Glu-46, Glu-71, Asn-100, and Asp-122 together coordinate S-adenosyl-L-methionine. Asp-122 is a catalytic residue. Substrate contacts are provided by residues Lys-126, Asp-158, and 199–202; that span reads TEYE.

This sequence belongs to the class I-like SAM-binding methyltransferase superfamily. TrmB family.

It carries out the reaction guanosine(46) in tRNA + S-adenosyl-L-methionine = N(7)-methylguanosine(46) in tRNA + S-adenosyl-L-homocysteine. Its pathway is tRNA modification; N(7)-methylguanine-tRNA biosynthesis. In terms of biological role, catalyzes the formation of N(7)-methylguanine at position 46 (m7G46) in tRNA. This chain is tRNA (guanine-N(7)-)-methyltransferase, found in Leuconostoc citreum (strain KM20).